Consider the following 578-residue polypeptide: Proline--tRNA ligase (578 aa).

Belongs to the class-II aminoacyl-tRNA synthetase family. ProS type 1 subfamily. As to quaternary structure, homodimer.

It is found in the cytoplasm. The enzyme catalyses tRNA(Pro) + L-proline + ATP = L-prolyl-tRNA(Pro) + AMP + diphosphate. Catalyzes the attachment of proline to tRNA(Pro) in a two-step reaction: proline is first activated by ATP to form Pro-AMP and then transferred to the acceptor end of tRNA(Pro). As ProRS can inadvertently accommodate and process non-cognate amino acids such as alanine and cysteine, to avoid such errors it has two additional distinct editing activities against alanine. One activity is designated as 'pretransfer' editing and involves the tRNA(Pro)-independent hydrolysis of activated Ala-AMP. The other activity is designated 'posttransfer' editing and involves deacylation of mischarged Ala-tRNA(Pro). The misacylated Cys-tRNA(Pro) is not edited by ProRS. This chain is Proline--tRNA ligase, found in Brachyspira hyodysenteriae (strain ATCC 49526 / WA1).